A 227-amino-acid chain; its full sequence is Cytochrome c oxidase subunit 2 (227 aa).

Topologically, residues Met-1–Ser-14 are mitochondrial intermembrane. A helical membrane pass occupies residues Pro-15–Met-45. Topologically, residues Leu-46–Gln-59 are mitochondrial matrix. The chain crosses the membrane as a helical span at residues Glu-60–Met-87. Topologically, residues Asp-88–Val-227 are mitochondrial intermembrane. Positions 161, 196, 198, 200, 204, and 207 each coordinate Cu cation. Glu-198 is a binding site for Mg(2+). Phosphotyrosine is present on Tyr-218.

Belongs to the cytochrome c oxidase subunit 2 family. Component of the cytochrome c oxidase (complex IV, CIV), a multisubunit enzyme composed of 14 subunits. The complex is composed of a catalytic core of 3 subunits MT-CO1, MT-CO2 and MT-CO3, encoded in the mitochondrial DNA, and 11 supernumerary subunits COX4I, COX5A, COX5B, COX6A, COX6B, COX6C, COX7A, COX7B, COX7C, COX8 and NDUFA4, which are encoded in the nuclear genome. The complex exists as a monomer or a dimer and forms supercomplexes (SCs) in the inner mitochondrial membrane with NADH-ubiquinone oxidoreductase (complex I, CI) and ubiquinol-cytochrome c oxidoreductase (cytochrome b-c1 complex, complex III, CIII), resulting in different assemblies (supercomplex SCI(1)III(2)IV(1) and megacomplex MCI(2)III(2)IV(2)). Found in a complex with TMEM177, COA6, COX18, COX20, SCO1 and SCO2. Interacts with TMEM177 in a COX20-dependent manner. Interacts with COX20. Interacts with COX16. The cofactor is Cu cation.

The protein localises to the mitochondrion inner membrane. It catalyses the reaction 4 Fe(II)-[cytochrome c] + O2 + 8 H(+)(in) = 4 Fe(III)-[cytochrome c] + 2 H2O + 4 H(+)(out). In terms of biological role, component of the cytochrome c oxidase, the last enzyme in the mitochondrial electron transport chain which drives oxidative phosphorylation. The respiratory chain contains 3 multisubunit complexes succinate dehydrogenase (complex II, CII), ubiquinol-cytochrome c oxidoreductase (cytochrome b-c1 complex, complex III, CIII) and cytochrome c oxidase (complex IV, CIV), that cooperate to transfer electrons derived from NADH and succinate to molecular oxygen, creating an electrochemical gradient over the inner membrane that drives transmembrane transport and the ATP synthase. Cytochrome c oxidase is the component of the respiratory chain that catalyzes the reduction of oxygen to water. Electrons originating from reduced cytochrome c in the intermembrane space (IMS) are transferred via the dinuclear copper A center (CU(A)) of subunit 2 and heme A of subunit 1 to the active site in subunit 1, a binuclear center (BNC) formed by heme A3 and copper B (CU(B)). The BNC reduces molecular oxygen to 2 water molecules using 4 electrons from cytochrome c in the IMS and 4 protons from the mitochondrial matrix. The protein is Cytochrome c oxidase subunit 2 (MT-CO2) of Vulpes zerda (Fennec fox).